Here is a 101-residue protein sequence, read N- to C-terminus: Integration host factor subunit beta (101 aa).

The tract at residues 57–76 is disordered; sequence PARAGRNPRTGEHVPVDQKS.

This sequence belongs to the bacterial histone-like protein family. In terms of assembly, heterodimer of an alpha and a beta chain.

Its function is as follows. This protein is one of the two subunits of integration host factor, a specific DNA-binding protein that functions in genetic recombination as well as in transcriptional and translational control. The chain is Integration host factor subunit beta from Nitrobacter winogradskyi (strain ATCC 25391 / DSM 10237 / CIP 104748 / NCIMB 11846 / Nb-255).